We begin with the raw amino-acid sequence, 933 residues long: Bromodomain testis-specific protein (933 aa).

Residues 1–21 (MSMSSRHLHSSIVNPPPPEYI) are disordered. A Bromo 1 domain is found at 28–134 (RLTNQLQYLE…KVFMEKIAEM (107 aa)). The Nuclear localization signal signature appears at 214-225 (KGIKRKADTTTP). The disordered stretch occupies residues 235-263 (ESSPTLSEPKPNKILSGTEKTRSAETSAV). The Bromo 2 domain maps to 278 to 385 (NQICEQLKHC…DVFEGMFAKI (108 aa)). Disordered stretches follow at residues 398 to 425 (RYKT…DERA), 576 to 610 (KPSS…QLSS), and 627 to 662 (GGPS…ESAT). A compositionally biased stretch (low complexity) spans 404 to 418 (EESSSSSSSEQSSSS). Positions 423 to 448 (ERAQHLALLQEQLRAVQEQLKALTET) form a coiled coil. One can recognise an NET domain in the interval 495 to 577 (VSDEEEDVKP…VCLRKRPKKP (83 aa)). Basic and acidic residues predominate over residues 584 to 603 (KSKEQLNKEKKQELEKRLRD). The segment covering 630–660 (SRLSESSTSSSASDVSNSSDSSSSDSSDSES) has biased composition (low complexity). Residues 829–917 (AKEERERALK…RREAMAGTID (89 aa)) adopt a coiled-coil conformation.

The protein belongs to the BET family.

Its subcellular location is the nucleus. In terms of biological role, testis-specific chromatin protein that specifically binds histone H4 acetylated at 'Lys-5' and 'Lys-8' (H4K5ac and H4K8ac, respectively) and plays a key role in spermatogenesis. Required in late pachytene spermatocytes: plays a role in meiotic and post-meiotic cells by binding to acetylated histones at the promoter of specific meiotic and post-meiotic genes, facilitating their activation at the appropriate time. In the post-meiotic phase of spermatogenesis, binds to hyperacetylated histones and participates in their general removal from DNA. Also recognizes and binds a subset of butyrylated histones: able to bind histone H4 butyrylated at 'Lys-8' (H4K8ac), while it is not able to bind H4 butyrylated at 'Lys-5' (H4K5ac). This Xenopus tropicalis (Western clawed frog) protein is Bromodomain testis-specific protein (brdt).